Reading from the N-terminus, the 507-residue chain is ATP synthase subunit alpha, chloroplastic (507 aa).

170-177 (GDRQTGKT) is an ATP binding site.

It belongs to the ATPase alpha/beta chains family. F-type ATPases have 2 components, CF(1) - the catalytic core - and CF(0) - the membrane proton channel. CF(1) has five subunits: alpha(3), beta(3), gamma(1), delta(1), epsilon(1). CF(0) has four main subunits: a, b, b' and c.

It is found in the plastid. It localises to the chloroplast thylakoid membrane. The enzyme catalyses ATP + H2O + 4 H(+)(in) = ADP + phosphate + 5 H(+)(out). Functionally, produces ATP from ADP in the presence of a proton gradient across the membrane. The alpha chain is a regulatory subunit. This Panax ginseng (Korean ginseng) protein is ATP synthase subunit alpha, chloroplastic.